A 908-amino-acid chain; its full sequence is NADH-quinone oxidoreductase subunit G (908 aa).

In terms of domain architecture, 2Fe-2S ferredoxin-type spans 2–83 (ATIHVDGKEY…GTFISIDDEE (82 aa)). C34, C45, C48, and C67 together coordinate [2Fe-2S] cluster. The 4Fe-4S His(Cys)3-ligated-type domain maps to 83-122 (EAKQFRESVVEWLMTNHPHDCPVCEEGGNCHLQDMTVMTG). [4Fe-4S] cluster contacts are provided by H99, C103, C106, C112, C151, C154, C157, C201, C228, C231, C235, and C263. The region spanning 221–277 (MQFAPSICQQCSIGCNISPGERYGELRRIENRYNGTVNHYFLCDRGRFGYGYVNLKD) is the 4Fe-4S Mo/W bis-MGD-type domain.

It belongs to the complex I 75 kDa subunit family. As to quaternary structure, composed of 13 different subunits. Subunits NuoCD, E, F, and G constitute the peripheral sector of the complex. It depends on [2Fe-2S] cluster as a cofactor. [4Fe-4S] cluster serves as cofactor.

The enzyme catalyses a quinone + NADH + 5 H(+)(in) = a quinol + NAD(+) + 4 H(+)(out). Its function is as follows. NDH-1 shuttles electrons from NADH, via FMN and iron-sulfur (Fe-S) centers, to quinones in the respiratory chain. The immediate electron acceptor for the enzyme in this species is believed to be ubiquinone. Couples the redox reaction to proton translocation (for every two electrons transferred, four hydrogen ions are translocated across the cytoplasmic membrane), and thus conserves the redox energy in a proton gradient. The sequence is that of NADH-quinone oxidoreductase subunit G (nuoG) from Shigella flexneri.